The following is a 311-amino-acid chain: 4-diphosphocytidyl-2-C-methyl-D-erythritol kinase (311 aa).

Lysine 16 is a catalytic residue. 101–111 (PVAGGMAGGSA) contacts ATP. Aspartate 143 is a catalytic residue.

It belongs to the GHMP kinase family. IspE subfamily.

It catalyses the reaction 4-CDP-2-C-methyl-D-erythritol + ATP = 4-CDP-2-C-methyl-D-erythritol 2-phosphate + ADP + H(+). The protein operates within isoprenoid biosynthesis; isopentenyl diphosphate biosynthesis via DXP pathway; isopentenyl diphosphate from 1-deoxy-D-xylulose 5-phosphate: step 3/6. Catalyzes the phosphorylation of the position 2 hydroxy group of 4-diphosphocytidyl-2C-methyl-D-erythritol. This is 4-diphosphocytidyl-2-C-methyl-D-erythritol kinase from Rhodococcus jostii (strain RHA1).